Reading from the N-terminus, the 245-residue chain is 2,3-bisphosphoglycerate-dependent phosphoglycerate mutase (245 aa).

Substrate-binding positions include 8–15 (RHGQSLWN), 21–22 (TG), R60, 87–90 (ERHY), K98, 114–115 (RR), and 183–184 (GN). H9 acts as the Tele-phosphohistidine intermediate in catalysis. E87 (proton donor/acceptor) is an active-site residue.

The protein belongs to the phosphoglycerate mutase family. BPG-dependent PGAM subfamily.

It carries out the reaction (2R)-2-phosphoglycerate = (2R)-3-phosphoglycerate. It participates in carbohydrate degradation; glycolysis; pyruvate from D-glyceraldehyde 3-phosphate: step 3/5. Catalyzes the interconversion of 2-phosphoglycerate and 3-phosphoglycerate. This chain is 2,3-bisphosphoglycerate-dependent phosphoglycerate mutase, found in Bacillus cereus (strain ATCC 14579 / DSM 31 / CCUG 7414 / JCM 2152 / NBRC 15305 / NCIMB 9373 / NCTC 2599 / NRRL B-3711).